A 343-amino-acid polypeptide reads, in one-letter code: Uroporphyrinogen decarboxylase (343 aa).

Residues 26 to 30 (RQAGR), aspartate 75, tyrosine 150, serine 205, and histidine 319 contribute to the substrate site.

Belongs to the uroporphyrinogen decarboxylase family. In terms of assembly, homodimer.

The protein resides in the cytoplasm. The catalysed reaction is uroporphyrinogen III + 4 H(+) = coproporphyrinogen III + 4 CO2. Its pathway is porphyrin-containing compound metabolism; protoporphyrin-IX biosynthesis; coproporphyrinogen-III from 5-aminolevulinate: step 4/4. Catalyzes the decarboxylation of four acetate groups of uroporphyrinogen-III to yield coproporphyrinogen-III. The protein is Uroporphyrinogen decarboxylase of Syntrophotalea carbinolica (strain DSM 2380 / NBRC 103641 / GraBd1) (Pelobacter carbinolicus).